A 210-amino-acid polypeptide reads, in one-letter code: Orotate phosphoribosyltransferase (210 aa).

Lys26 lines the 5-phospho-alpha-D-ribose 1-diphosphate pocket. 34–35 (FF) is an orotate binding site. Residues 72 to 73 (YK), Arg98, Lys99, Lys102, His104, and 123 to 131 (DDVITAGTA) contribute to the 5-phospho-alpha-D-ribose 1-diphosphate site. The orotate site is built by Thr127 and Arg155.

Belongs to the purine/pyrimidine phosphoribosyltransferase family. PyrE subfamily. In terms of assembly, homodimer. Mg(2+) serves as cofactor.

The catalysed reaction is orotidine 5'-phosphate + diphosphate = orotate + 5-phospho-alpha-D-ribose 1-diphosphate. Its pathway is pyrimidine metabolism; UMP biosynthesis via de novo pathway; UMP from orotate: step 1/2. Its function is as follows. Catalyzes the transfer of a ribosyl phosphate group from 5-phosphoribose 1-diphosphate to orotate, leading to the formation of orotidine monophosphate (OMP). This Legionella pneumophila (strain Paris) protein is Orotate phosphoribosyltransferase.